The sequence spans 214 residues: Thymidylate kinase (214 aa).

12-19 (GGEGAGKS) is a binding site for ATP.

It belongs to the thymidylate kinase family.

The catalysed reaction is dTMP + ATP = dTDP + ADP. Phosphorylation of dTMP to form dTDP in both de novo and salvage pathways of dTTP synthesis. This chain is Thymidylate kinase, found in Gluconobacter oxydans (strain 621H) (Gluconobacter suboxydans).